Consider the following 98-residue polypeptide: Serine protease inhibitor Kazal-type 14 (98 aa).

The signal sequence occupies residues 1-23 (MVKYFQVLWSLLFSIMLHSMLLA). Residues 35 to 98 (GLIKIKCPYK…QIRYYHTGRC (64 aa)) form the Kazal-like domain. Cystine bridges form between C41–C80, C58–C77, and C66–C98. N-linked (GlcNAc...) asparagine glycosylation occurs at N52.

It localises to the secreted. May be a serine protease inhibitor. This Rattus norvegicus (Rat) protein is Serine protease inhibitor Kazal-type 14 (Spink14).